The sequence spans 320 residues: tRNA pseudouridine synthase B (320 aa).

Asp-49 serves as the catalytic Nucleophile.

This sequence belongs to the pseudouridine synthase TruB family. Type 1 subfamily.

It catalyses the reaction uridine(55) in tRNA = pseudouridine(55) in tRNA. In terms of biological role, responsible for synthesis of pseudouridine from uracil-55 in the psi GC loop of transfer RNAs. This is tRNA pseudouridine synthase B from Bartonella tribocorum (strain CIP 105476 / IBS 506).